A 126-amino-acid polypeptide reads, in one-letter code: Large ribosomal subunit protein bL19 (126 aa).

The protein belongs to the bacterial ribosomal protein bL19 family.

This protein is located at the 30S-50S ribosomal subunit interface and may play a role in the structure and function of the aminoacyl-tRNA binding site. This chain is Large ribosomal subunit protein bL19, found in Paracoccus denitrificans (strain Pd 1222).